The sequence spans 626 residues: Chaperone protein HtpG (626 aa).

The tract at residues 1–331 (MSETVERHEF…TDDLPLNVSR (331 aa)) is a; substrate-binding. Residues 332–544 (EMLQSTPTLQ…GMGPDLQMQR (213 aa)) are b. A c region spans residues 545–626 (LLRRAGRGFG…GTAAKPAESA (82 aa)).

This sequence belongs to the heat shock protein 90 family. In terms of assembly, homodimer.

The protein localises to the cytoplasm. Functionally, molecular chaperone. Has ATPase activity. The polypeptide is Chaperone protein HtpG (Methylorubrum extorquens (strain PA1) (Methylobacterium extorquens)).